Consider the following 486-residue polypeptide: 2-succinylbenzoate--CoA ligase (486 aa).

It belongs to the ATP-dependent AMP-binding enzyme family. MenE subfamily.

The enzyme catalyses 2-succinylbenzoate + ATP + CoA = 2-succinylbenzoyl-CoA + AMP + diphosphate. The protein operates within quinol/quinone metabolism; 1,4-dihydroxy-2-naphthoate biosynthesis; 1,4-dihydroxy-2-naphthoate from chorismate: step 5/7. It functions in the pathway quinol/quinone metabolism; menaquinone biosynthesis. Converts 2-succinylbenzoate (OSB) to 2-succinylbenzoyl-CoA (OSB-CoA). This is 2-succinylbenzoate--CoA ligase from Bacillus subtilis (strain 168).